The following is a 703-amino-acid chain: Phenylalanine aminomutase (L-beta-phenylalanine forming) (703 aa).

The Proton donor/acceptor role is filled by Tyr79. Positions 177 to 179 form a cross-link, 5-imidazolinone (Ala-Gly); sequence ASG. Ser178 bears the 2,3-didehydroalanine (Ser) mark.

The protein belongs to the PAL/histidase family. In terms of processing, contains an active site 4-methylidene-imidazol-5-one (MIO), which is formed autocatalytically by cyclization and dehydration of residues Ala-Ser-Gly.

It carries out the reaction L-phenylalanine = L-beta-phenylalanine. It functions in the pathway mycotoxin biosynthesis. Functionally, phenylalanine aminomutase; part of the gene cluster that mediates the biosynthesis of the mycotoxin cyclochlorotine, a hepatotoxic and carcinogenic cyclic chlorinated pentapeptide. Within the pathway, cctP1 provides the uncommon building block beta-Phe from Phe. The NRPS cctN initially catalyzes the condensation of L-serine (Ser), Pro, L-2-aminobutyrate (2Abu), Ser, and beta-Phe in this order to produce isocyclotine. After the dichlorination of Pro2 catalyzed by cctP2 to produce isocyclochlorotine, the cctO-mediated transacylation of isocyclochlorotine can furnish cyclochlorotine. The subsequent hydroxylation of cyclochlorotine by cctR yields hydroxycyclochlorotine as the final product. CctP1 probably acts as a phenylalanine aminomutase and provides the uncommon building block beta-Phe. Furthermore, 2Abu can be synthesized from threonine by one of the threonine dehydratases and transaminases localized outside of the cluster. The functions of the remaining proteins encoded by the cluster, cctM and cctT, have not been identified yet. This chain is Phenylalanine aminomutase (L-beta-phenylalanine forming), found in Talaromyces islandicus (Penicillium islandicum).